A 150-amino-acid polypeptide reads, in one-letter code: Mediator of RNA polymerase II transcription subunit 22a (150 aa).

A coiled-coil region spans residues 99–127 (SLNDHVEQRIAEFDQEAEKTNRLLARIAD).

This sequence belongs to the Mediator complex subunit 22 family. In terms of assembly, component of the Mediator complex.

The protein resides in the nucleus. Functionally, component of the Mediator complex, a coactivator involved in the regulated transcription of nearly all RNA polymerase II-dependent genes. Mediator functions as a bridge to convey information from gene-specific regulatory proteins to the basal RNA polymerase II transcription machinery. The Mediator complex, having a compact conformation in its free form, is recruited to promoters by direct interactions with regulatory proteins and serves for the assembly of a functional preinitiation complex with RNA polymerase II and the general transcription factors. In Arabidopsis thaliana (Mouse-ear cress), this protein is Mediator of RNA polymerase II transcription subunit 22a (MED22A).